The sequence spans 436 residues: GTPase Der (436 aa).

EngA-type G domains follow at residues 4 to 167 (PTVA…PVEE) and 175 to 351 (IRFS…ESQN). Residues 10–17 (GRPNVGKS), 57–61 (DTGGI), 119–122 (NKVD), 181–188 (GRPNVGKS), 229–233 (DTAGM), and 294–297 (NKWD) contribute to the GTP site. Residues 352–436 (KRIPSAVLND…PIHLIARKRK (85 aa)) enclose the KH-like domain.

This sequence belongs to the TRAFAC class TrmE-Era-EngA-EngB-Septin-like GTPase superfamily. EngA (Der) GTPase family. Associates with the 50S ribosomal subunit.

In terms of biological role, GTPase that plays an essential role in the late steps of ribosome biogenesis. In Streptococcus pyogenes serotype M28 (strain MGAS6180), this protein is GTPase Der.